A 203-amino-acid polypeptide reads, in one-letter code: Large ribosomal subunit protein bL25 (203 aa).

This sequence belongs to the bacterial ribosomal protein bL25 family. CTC subfamily. Part of the 50S ribosomal subunit; part of the 5S rRNA/L5/L18/L25 subcomplex. Contacts the 5S rRNA. Binds to the 5S rRNA independently of L5 and L18.

In terms of biological role, this is one of the proteins that binds to the 5S RNA in the ribosome where it forms part of the central protuberance. This is Large ribosomal subunit protein bL25 from Wolbachia pipientis subsp. Culex pipiens (strain wPip).